A 98-amino-acid chain; its full sequence is Co-chaperonin GroES (98 aa).

The protein belongs to the GroES chaperonin family. Heptamer of 7 subunits arranged in a ring. Interacts with the chaperonin GroEL.

It localises to the cytoplasm. Its function is as follows. Together with the chaperonin GroEL, plays an essential role in assisting protein folding. The GroEL-GroES system forms a nano-cage that allows encapsulation of the non-native substrate proteins and provides a physical environment optimized to promote and accelerate protein folding. GroES binds to the apical surface of the GroEL ring, thereby capping the opening of the GroEL channel. The protein is Co-chaperonin GroES of Bartonella quintana (strain Toulouse) (Rochalimaea quintana).